A 949-amino-acid polypeptide reads, in one-letter code: Glycine dehydrogenase (decarboxylating) (949 aa).

Lys-697 bears the N6-(pyridoxal phosphate)lysine mark.

Belongs to the GcvP family. The glycine cleavage system is composed of four proteins: P, T, L and H. Pyridoxal 5'-phosphate is required as a cofactor.

It carries out the reaction N(6)-[(R)-lipoyl]-L-lysyl-[glycine-cleavage complex H protein] + glycine + H(+) = N(6)-[(R)-S(8)-aminomethyldihydrolipoyl]-L-lysyl-[glycine-cleavage complex H protein] + CO2. Functionally, the glycine cleavage system catalyzes the degradation of glycine. The P protein binds the alpha-amino group of glycine through its pyridoxal phosphate cofactor; CO(2) is released and the remaining methylamine moiety is then transferred to the lipoamide cofactor of the H protein. This is Glycine dehydrogenase (decarboxylating) from Deinococcus radiodurans (strain ATCC 13939 / DSM 20539 / JCM 16871 / CCUG 27074 / LMG 4051 / NBRC 15346 / NCIMB 9279 / VKM B-1422 / R1).